Consider the following 241-residue polypeptide: Ribosomal RNA small subunit methyltransferase G (241 aa).

S-adenosyl-L-methionine contacts are provided by residues glycine 96, phenylalanine 101, 119–121 (EAS), 147–148 (VE), and arginine 166.

The protein belongs to the methyltransferase superfamily. RNA methyltransferase RsmG family.

It localises to the cytoplasm. It carries out the reaction guanosine(527) in 16S rRNA + S-adenosyl-L-methionine = N(7)-methylguanosine(527) in 16S rRNA + S-adenosyl-L-homocysteine. Functionally, specifically methylates the N7 position of guanine in position 527 of 16S rRNA. This chain is Ribosomal RNA small subunit methyltransferase G, found in Syntrophus aciditrophicus (strain SB).